The chain runs to 654 residues: Coiled-coil domain-containing protein 30 (654 aa).

Residues Thr-38–Ala-65 are disordered. Positions Phe-53–Ser-62 are enriched in basic and acidic residues. 2 coiled-coil regions span residues Arg-97–Ala-244 and Lys-276–Arg-559. The disordered stretch occupies residues Ala-614 to Leu-654. Over residues Ser-625–Leu-654 the composition is skewed to polar residues.

The protein belongs to the prefoldin subunit beta family.

The chain is Coiled-coil domain-containing protein 30 (Ccdc30) from Mus musculus (Mouse).